Consider the following 209-residue polypeptide: dTTP/UTP pyrophosphatase (209 aa).

Aspartate 88 acts as the Proton acceptor in catalysis.

It belongs to the Maf family. YhdE subfamily. A divalent metal cation is required as a cofactor.

The protein localises to the cytoplasm. It carries out the reaction dTTP + H2O = dTMP + diphosphate + H(+). The catalysed reaction is UTP + H2O = UMP + diphosphate + H(+). In terms of biological role, nucleoside triphosphate pyrophosphatase that hydrolyzes dTTP and UTP. May have a dual role in cell division arrest and in preventing the incorporation of modified nucleotides into cellular nucleic acids. The protein is dTTP/UTP pyrophosphatase of Burkholderia mallei (strain ATCC 23344).